A 706-amino-acid chain; its full sequence is LKSLTVLAESPVESRELLTELGVEKVIVEGKTAARVTQGDSDKPKQVPPNQEGKEEAPVATAAQPKEPAEQPDAKEGPAEGQQPGGVDNAAEASPAAVSPSRPQPAESEVGNSSPGEKGSDAPSTEARGMELEGKEEEGEAMVEDEEEAKIPKAAQPKSESKENAEDNESGSTDSGQENSGETRLLRSGTYSDRTESKAYAAVTHKCEDCGKEFTHTGNFKRHIRIHTGEKPFSCRECNKAFSDPAACKAHEKTHSPLKPYGCEECGKSYRLISLLNLHKKRHTGEAKYRCDDCGKLFTTSGNLKRHQLVHSGEKPYQCDYCGRSFSDPTSKMRHLETHDTDKEHKCPHCDKKFNQVGNLKAHLKIHIADGPLKCRECGNEFTTSGNLKRHLRIHSGEKPYVCVHCQRQFADPGALQAHVPIHTGEKPCQCLICGKAFTQASSLIAHVRHDTGEKPYVCERCGKRFVQSSQLANHIRHHDNIRPHKCTVCNKAFVNVGDLSKHIIIHTGEKPFLCDKCGRGFNRVDNLRSHVKTVHQGKAGMKILEPEDGSELNIVTVASDDMVTLATEALAATAVTQLTVVPVAAAVTADETEALKAEITKAVKQVQEADPNTQILYACDSCGEKFLDATSLAQHVRIHTAQALVMFQADTDFYQQYGAAAATWQTEQVIPATELLFRPRDSPQEAPAAPLAPVPLAGEGQAPAE.

The BTB domain occupies 1–12; that stretch reads LKSLTVLAESPV. The disordered stretch occupies residues 32–194; the sequence is TAARVTQGDS…LLRSGTYSDR (163 aa). A compositionally biased stretch (basic and acidic residues) spans 67 to 78; that stretch reads EPAEQPDAKEGP. A compositionally biased stretch (low complexity) spans 90 to 106; that stretch reads AAEASPAAVSPSRPQPA. Positions 134–148 are enriched in acidic residues; sequence GKEEEGEAMVEDEEE. Positions 170–182 are enriched in polar residues; sequence SGSTDSGQENSGE. 13 C2H2-type zinc fingers span residues 205–227, 233–255, 261–283, 289–311, 317–339, 345–367, 373–395, 401–423, 427–450, 457–479, 485–507, 513–536, and 618–640; these read HKCE…IRIH, FSCR…EKTH, YGCE…KKRH, YRCD…QLVH, YQCD…LETH, HKCP…LKIH, LKCR…LRIH, YVCV…VPIH, KPCQ…HVRH, YVCE…IRHH, HKCT…IIIH, FLCD…KTVH, and YACD…VRIH. The segment at 680–706 is disordered; sequence PRDSPQEAPAAPLAPVPLAGEGQAPAE. The segment covering 687–698 has biased composition (low complexity); that stretch reads APAAPLAPVPLA.

Belongs to the krueppel C2H2-type zinc-finger protein family.

Its subcellular location is the nucleus. Transcription factor that can function as an activator or repressor depending on its binding partners, and by targeting negative regulators of cell cycle progression. Plays a critical role in early lymphocyte development, where it is essential to prevent apoptosis in lymphoid precursors, allowing them to survive in response to IL7 and undergo proper lineage commitment. Has been shown to bind to the promoters of adenovirus major late protein and cyclin D1 and activate transcription. Required for early embryonic development during gastrulation. Represses RB1 transcription. The polypeptide is Zinc finger and BTB domain-containing protein 17 (ZBTB17) (Gallus gallus (Chicken)).